The sequence spans 183 residues: Capsid protein (183 aa).

A disordered region spans residues Asn-136 to Cys-183. Positions Val-149–Ser-176 are enriched in basic residues. 3 positions are modified to phosphoserine; by host: Ser-155, Ser-162, and Ser-170. The stretch at Ser-155 to Pro-161 is one 1; half-length repeat. Positions Ser-155–Gln-177 are 3 X 8 AA repeats of S-P-R-R-R-[PR]-S-Q. The Bipartite nuclear localization signal signature appears at Arg-158 to Arg-175. Repeat copies occupy residues Ser-162–Gln-169 and Ser-170–Gln-177. The interval Gln-177–Cys-183 is RNA binding.

It belongs to the orthohepadnavirus core antigen family. As to quaternary structure, homodimerizes, then multimerizes. Interacts with cytosol exposed regions of viral L glycoprotein present in the reticulum-to-Golgi compartment. Interacts with human FLNB. Phosphorylated form interacts with host importin alpha; this interaction depends on the exposure of the NLS, which itself depends upon genome maturation and/or phosphorylation of the capsid protein. Interacts with host NUP153. Post-translationally, phosphorylated by host SRPK1, SRPK2, and maybe protein kinase C or GAPDH. Phosphorylation is critical for pregenomic RNA packaging. Protein kinase C phosphorylation is stimulated by HBx protein and may play a role in transport of the viral genome to the nucleus at the late step during the viral replication cycle.

Its subcellular location is the virion. The protein resides in the host cytoplasm. In terms of biological role, self assembles to form an icosahedral capsid. Most capsids appear to be large particles with an icosahedral symmetry of T=4 and consist of 240 copies of capsid protein, though a fraction forms smaller T=3 particles consisting of 180 capsid proteins. Entering capsids are transported along microtubules to the nucleus. Phosphorylation of the capsid is thought to induce exposure of nuclear localization signal in the C-terminal portion of the capsid protein that allows binding to the nuclear pore complex via the importin (karyopherin-) alpha and beta. Capsids are imported in intact form through the nuclear pore into the nuclear basket, where it probably binds NUP153. Only capsids that contain the mature viral genome can release the viral DNA and capsid protein into the nucleoplasm. Immature capsids get stuck in the basket. Capsids encapsulate the pre-genomic RNA and the P protein. Pre-genomic RNA is reverse-transcribed into DNA while the capsid is still in the cytoplasm. The capsid can then either be directed to the nucleus, providing more genomes for transcription, or bud through the endoplasmic reticulum to provide new virions. This chain is Capsid protein, found in Homo sapiens (Human).